The chain runs to 952 residues: Glycine dehydrogenase (decarboxylating) (952 aa).

An N6-(pyridoxal phosphate)lysine modification is found at Lys703.

The protein belongs to the GcvP family. As to quaternary structure, the glycine cleavage system is composed of four proteins: P, T, L and H. It depends on pyridoxal 5'-phosphate as a cofactor.

It carries out the reaction N(6)-[(R)-lipoyl]-L-lysyl-[glycine-cleavage complex H protein] + glycine + H(+) = N(6)-[(R)-S(8)-aminomethyldihydrolipoyl]-L-lysyl-[glycine-cleavage complex H protein] + CO2. Functionally, the glycine cleavage system catalyzes the degradation of glycine. The P protein binds the alpha-amino group of glycine through its pyridoxal phosphate cofactor; CO(2) is released and the remaining methylamine moiety is then transferred to the lipoamide cofactor of the H protein. The sequence is that of Glycine dehydrogenase (decarboxylating) from Mycobacterium leprae (strain Br4923).